A 616-amino-acid chain; its full sequence is Chaperone protein HtpG (616 aa).

Positions 1 to 334 are a; substrate-binding; it reads MAEKQIHTFQ…TADLPLNVSR (334 aa). The b stretch occupies residues 335 to 549; it reads EILQGNKVVD…ENEMGGNMER (215 aa). Positions 550–616 are c; that stretch reads IMKSLGQDVP…FVKRINKLIN (67 aa).

This sequence belongs to the heat shock protein 90 family. As to quaternary structure, homodimer.

It localises to the cytoplasm. Molecular chaperone. Has ATPase activity. The protein is Chaperone protein HtpG of Ruthia magnifica subsp. Calyptogena magnifica.